The chain runs to 379 residues: MTITVNTNVSAMTAQRYLNKATGELNTSMERLSSGNKINSAKDDAAGLQISNRLTAQSRGLDVAMRNANDGISIAQTAEGAMNESTSILQRMRDLALQSANGTNSASERQALDEESTALQDELNRIAETTSFGGRKLLNGSFGEASFQIGASSGEAIIMGLTSIRADDFRMGGQSFLAEQGKDKDWGVPAGARDLKFEFTTQAGELVTLDVLAKDGDDIEELATYINGQTDKLKASVDQDGKLQIFAAEPNLQGDLAISGGLATELGLNGGPGVKTTVQDIDITSVGGSQNAVGVLDAALRYVDSQRAELGAKQNRLSHSINNLANIQENVEASNSRIKDTDFAKETTQMTKAQILQQAGTSILAQAKQLPNSAMSLLQ.

Coiled coils occupy residues 103-128 (TNSA…RIAE) and 302-341 (YVDS…IKDT).

This sequence belongs to the bacterial flagellin family. Heteromer of multiple flagellin subunits including FlaA, FlaB, FlaC, FlaD and possibly FlaE.

The protein localises to the secreted. It is found in the bacterial flagellum. Flagellin is the subunit protein which polymerizes to form the filaments of bacterial flagella. FlaA is essential for flagellar synthesis and full motility. Important for virulence at two different levels: is needed for crossing the fish integument and may play a role once the bacterium has entered the host. This chain is Flagellin A (flaA), found in Vibrio anguillarum (Listonella anguillarum).